The following is a 188-amino-acid chain: Ribosome-recycling factor (188 aa).

Belongs to the RRF family.

It is found in the cytoplasm. Functionally, responsible for the release of ribosomes from messenger RNA at the termination of protein biosynthesis. May increase the efficiency of translation by recycling ribosomes from one round of translation to another. The sequence is that of Ribosome-recycling factor from Anaeromyxobacter dehalogenans (strain 2CP-C).